A 431-amino-acid chain; its full sequence is MSKWTPAADEKNQGTLEFEIARAQVEEGLEQAFQRNKNEVSIPGFRKGKVTKQLFFQKFGEEALYQQAMDIVLPAAYEAAIDEAGITPVGRPNIEPVSMNKGEAWTLKAVVKTAPAIKLGEYLNLEVEAQDEEVADADVDAEIKRLQDGQAELVLQEESVKAENGDTVVIDFDGSVDGVKFDGGQGKDFSLALGSGQFIPGFEEQLVGHTAGEDVNVNVTFPEDYQAADLAGKEALFEVTIHELKRKELPELDDEFAKDVDEEVETLAELKEKTSKKLADEKAQAAKAAFEDAVISKAVDNASVDGDEIPAEMIDEDVHRQIDQYLGQLQQQGISREMFFQISGQTEDDLHKQFEEGAETRVKTGLILEAIVAAEKIDPSAEQVSEEVASLAAQYNMEEDKVRAAISESMLKHDIAMREAIKKVTDSAKAV.

Positions 165 to 250 constitute a PPIase FKBP-type domain; that stretch reads GDTVVIDFDG…IHELKRKELP (86 aa).

This sequence belongs to the FKBP-type PPIase family. Tig subfamily.

It localises to the cytoplasm. It catalyses the reaction [protein]-peptidylproline (omega=180) = [protein]-peptidylproline (omega=0). Involved in protein export. Acts as a chaperone by maintaining the newly synthesized protein in an open conformation. Functions as a peptidyl-prolyl cis-trans isomerase. The chain is Trigger factor from Leuconostoc mesenteroides subsp. mesenteroides (strain ATCC 8293 / DSM 20343 / BCRC 11652 / CCM 1803 / JCM 6124 / NCDO 523 / NBRC 100496 / NCIMB 8023 / NCTC 12954 / NRRL B-1118 / 37Y).